Here is a 198-residue protein sequence, read N- to C-terminus: 7-methyl-GTP pyrophosphatase (198 aa).

The active-site Proton acceptor is the Asp72.

The protein belongs to the Maf family. YceF subfamily. A divalent metal cation serves as cofactor.

The protein localises to the cytoplasm. The catalysed reaction is N(7)-methyl-GTP + H2O = N(7)-methyl-GMP + diphosphate + H(+). Functionally, nucleoside triphosphate pyrophosphatase that hydrolyzes 7-methyl-GTP (m(7)GTP). May have a dual role in cell division arrest and in preventing the incorporation of modified nucleotides into cellular nucleic acids. This is 7-methyl-GTP pyrophosphatase from Idiomarina loihiensis (strain ATCC BAA-735 / DSM 15497 / L2-TR).